Reading from the N-terminus, the 531-residue chain is 2,3-bisphosphoglycerate-independent phosphoglycerate mutase (531 aa).

Mn(2+)-binding residues include D13 and S63. The Phosphoserine intermediate role is filled by S63. Substrate is bound by residues H124, 154–155 (RD), R187, R193, 261–264 (RPDR), and K342. Mn(2+) contacts are provided by D420, H424, D462, H463, and H480.

It belongs to the BPG-independent phosphoglycerate mutase family. As to quaternary structure, monomer. Mn(2+) is required as a cofactor.

The enzyme catalyses (2R)-2-phosphoglycerate = (2R)-3-phosphoglycerate. The protein operates within carbohydrate degradation; glycolysis; pyruvate from D-glyceraldehyde 3-phosphate: step 3/5. Its function is as follows. Catalyzes the interconversion of 2-phosphoglycerate and 3-phosphoglycerate. In Mycoplasma capricolum subsp. capricolum (strain California kid / ATCC 27343 / NCTC 10154), this protein is 2,3-bisphosphoglycerate-independent phosphoglycerate mutase.